Here is a 475-residue protein sequence, read N- to C-terminus: Doublecortin domain-containing protein 2 (475 aa).

2 consecutive Doublecortin domains span residues 17 to 100 (KSVL…LNYL) and 139 to 221 (CTIF…LPYS). Residues 234-475 (YGQKASSLPP…ESNKASSAVA (242 aa)) form a disordered region. The span at 252 to 272 (GSGNYRQSKSTIGSSDNSSPQ) shows a compositional bias: polar residues. A Phosphoserine modification is found at serine 270. Over residues 353 to 365 (EKTSKDANQKDDF) the composition is skewed to basic and acidic residues. A compositionally biased stretch (acidic residues) spans 407-419 (TDEENGEELDQVT). Positions 455–475 (TVTSPQENEGNESNKASSAVA) are enriched in polar residues.

As to quaternary structure, interacts with DVL1, DVL2 and DVL3. In terms of tissue distribution, expressed in hair cells of the inner ear.

The protein resides in the cell projection. Its subcellular location is the cilium. It is found in the cytoplasm. It localises to the cytoskeleton. The protein localises to the cilium axoneme. The protein resides in the kinocilium. Functionally, protein that plays a role in the inhibition of canonical Wnt signaling pathway. May be involved in neuronal migration during development of the cerebral neocortex. Involved in the control of ciliogenesis and ciliary length. This chain is Doublecortin domain-containing protein 2 (Dcdc2), found in Rattus norvegicus (Rat).